A 399-amino-acid chain; its full sequence is Aspartate aminotransferase (399 aa).

The L-aspartate site is built by glycine 42 and asparagine 179. Lysine 240 is modified (N6-(pyridoxal phosphate)lysine). Residue arginine 372 participates in L-aspartate binding.

It belongs to the class-I pyridoxal-phosphate-dependent aminotransferase family. As to quaternary structure, homodimer. Pyridoxal 5'-phosphate serves as cofactor.

Its subcellular location is the cytoplasm. It carries out the reaction L-aspartate + 2-oxoglutarate = oxaloacetate + L-glutamate. The polypeptide is Aspartate aminotransferase (aspC) (Sulfurisphaera tokodaii (strain DSM 16993 / JCM 10545 / NBRC 100140 / 7) (Sulfolobus tokodaii)).